Consider the following 209-residue polypeptide: Uracil phosphoribosyltransferase (209 aa).

5-phospho-alpha-D-ribose 1-diphosphate contacts are provided by residues Arg79, Arg104, and 131 to 139; that span reads DPMLATGGS. Residues Ile194 and 199–201 each bind uracil; that span reads GDA. Asp200 provides a ligand contact to 5-phospho-alpha-D-ribose 1-diphosphate.

This sequence belongs to the UPRTase family. Mg(2+) serves as cofactor.

It catalyses the reaction UMP + diphosphate = 5-phospho-alpha-D-ribose 1-diphosphate + uracil. The protein operates within pyrimidine metabolism; UMP biosynthesis via salvage pathway; UMP from uracil: step 1/1. With respect to regulation, allosterically activated by GTP. In terms of biological role, catalyzes the conversion of uracil and 5-phospho-alpha-D-ribose 1-diphosphate (PRPP) to UMP and diphosphate. In Clostridium botulinum (strain Alaska E43 / Type E3), this protein is Uracil phosphoribosyltransferase.